A 181-amino-acid chain; its full sequence is NADH-quinone oxidoreductase subunit I (181 aa).

4Fe-4S ferredoxin-type domains lie at 44–74 (LNRY…VEGA) and 90–119 (RVYQ…MTND). Positions 54, 57, 60, 64, 99, 102, 105, and 109 each coordinate [4Fe-4S] cluster.

Belongs to the complex I 23 kDa subunit family. As to quaternary structure, NDH-1 is composed of 14 different subunits. Subunits NuoA, H, J, K, L, M, N constitute the membrane sector of the complex. [4Fe-4S] cluster is required as a cofactor.

It localises to the cell membrane. It carries out the reaction a quinone + NADH + 5 H(+)(in) = a quinol + NAD(+) + 4 H(+)(out). In terms of biological role, NDH-1 shuttles electrons from NADH, via FMN and iron-sulfur (Fe-S) centers, to quinones in the respiratory chain. The immediate electron acceptor for the enzyme in this species is believed to be menaquinone. Couples the redox reaction to proton translocation (for every two electrons transferred, four hydrogen ions are translocated across the cytoplasmic membrane), and thus conserves the redox energy in a proton gradient. The chain is NADH-quinone oxidoreductase subunit I from Mycobacterium marinum (strain ATCC BAA-535 / M).